The chain runs to 402 residues: Zinc finger protein CONSTANS-LIKE 14 (402 aa).

Residues C12, C15, C35, H40, C55, C58, C78, and H83 each contribute to the Zn(2+) site. Residues 12-54 (CEFCGERTAVLFCRADTAKLCLPCDQHVHSANLLSRKHVRSQI) form a B box-type 1; atypical zinc finger. The B box-type 2; atypical zinc-finger motif lies at 55–97 (CDNCSKEPVSVRCFTDNLVLCQECDWDVHGSCSSSATHERSAV). The tract at residues 287-322 (SYQQEDSVHSTSTKGQETSKSNNIPAAIHSHKSSND) is disordered. Residues 295-310 (HSTSTKGQETSKSNNI) show a composition bias toward polar residues. Residues 345–372 (VTNADLEQMAQNRDNAMQRYKEKKKTRR) are a coiled coil. The CCT domain occupies 357–399 (RDNAMQRYKEKKKTRRYDKTIRYETRKARAETRLRVKGRFVKA).

Belongs to the CONSTANS family.

The protein localises to the nucleus. This chain is Zinc finger protein CONSTANS-LIKE 14 (COL14), found in Arabidopsis thaliana (Mouse-ear cress).